We begin with the raw amino-acid sequence, 515 residues long: Glucose-6-phosphate 1-dehydrogenase (515 aa).

Position 2 is an N-acetylalanine (A2). At S8 the chain carries Phosphoserine. A Phosphothreonine modification is found at T10. At F26 the chain carries Phosphoserine. Residues 38-45 (GASGDLAK) and R72 contribute to the NADP(+) site. An N6-acetyllysine modification is found at K89. NADP(+) is bound by residues Y147 and K171. Residues K171, 201–205 (HYLGK), E239, and D258 contribute to the D-glucose 6-phosphate site. At K171 the chain carries N6-(2-hydroxyisobutyryl)lysine; alternate. K171 is modified (N6-acetyllysine; alternate). H263 serves as the catalytic Proton acceptor. Residue R357 participates in NADP(+) binding. Positions 360 and 365 each coordinate D-glucose 6-phosphate. NADP(+)-binding residues include K366, R370, and R393. Q395 provides a ligand contact to D-glucose 6-phosphate. Residues 401–403 (YTK) and 421–423 (DLT) contribute to the NADP(+) site. Position 403 is an N6-acetyllysine (K403). The residue at position 432 (K432) is an N6-acetyllysine. R487 lines the NADP(+) pocket. An N6-acetyllysine modification is found at K497. NADP(+)-binding residues include Y503 and W509. Y503 is modified (phosphotyrosine).

It belongs to the glucose-6-phosphate dehydrogenase family. As to quaternary structure, homotetramer; dimer of dimers. Interacts with SIRT2; the interaction is enhanced by H(2)O(2) treatment. Forms a ternary complex with ALDOB and TP53; this interaction is direct. ALDOB stabilizes the complex inhibiting G6PD activity and keeping oxidative pentose phosphate metabolism in check. In terms of processing, acetylated by ELP3 at Lys-403; acetylation inhibits its homodimerization and enzyme activity. Deacetylated by SIRT2 at Lys-403; deacetylation stimulates its enzyme activity. Isoform Long is found in lymphoblasts, granulocytes and sperm.

The protein localises to the cytoplasm. The protein resides in the cytosol. It localises to the membrane. It carries out the reaction D-glucose 6-phosphate + NADP(+) = 6-phospho-D-glucono-1,5-lactone + NADPH + H(+). It functions in the pathway carbohydrate degradation; pentose phosphate pathway; D-ribulose 5-phosphate from D-glucose 6-phosphate (oxidative stage): step 1/3. Functionally, catalyzes the rate-limiting step of the oxidative pentose-phosphate pathway, which represents a route for the dissimilation of carbohydrates besides glycolysis. The main function of this enzyme is to provide reducing power (NADPH) and pentose phosphates for fatty acid and nucleic acid synthesis. The chain is Glucose-6-phosphate 1-dehydrogenase (G6PD) from Homo sapiens (Human).